An 85-amino-acid chain; its full sequence is UPF0291 protein SEQ_0545 (85 aa).

A disordered region spans residues T62 to S85.

The protein belongs to the UPF0291 family.

The protein localises to the cytoplasm. This Streptococcus equi subsp. equi (strain 4047) protein is UPF0291 protein SEQ_0545.